A 171-amino-acid polypeptide reads, in one-letter code: Co-chaperone protein HscB homolog (171 aa).

One can recognise a J domain in the interval 2 to 74 (NHFELFGLPL…ISRAEYLLVQ (73 aa)).

This sequence belongs to the HscB family. As to quaternary structure, interacts with HscA and stimulates its ATPase activity.

Functionally, co-chaperone involved in the maturation of iron-sulfur cluster-containing proteins. Seems to help targeting proteins to be folded toward HscA. This Vibrio atlanticus (strain LGP32) (Vibrio splendidus (strain Mel32)) protein is Co-chaperone protein HscB homolog.